The primary structure comprises 230 residues: Putative 14-3-3-like protein GF14-H (230 aa).

Belongs to the 14-3-3 family.

Its function is as follows. Is associated with a DNA binding complex that binds to the G box, a well-characterized cis-acting DNA regulatory element found in plant genes. The protein is Putative 14-3-3-like protein GF14-H (GF14H) of Oryza sativa subsp. japonica (Rice).